The following is a 577-amino-acid chain: Alpha-1,2-mannosyltransferase alg9 (577 aa).

The first 29 residues, M1 to A29, serve as a signal peptide directing secretion. Over S30–R68 the chain is Extracellular. A helical membrane pass occupies residues S69–S89. The Cytoplasmic segment spans residues R90–Y95. A helical membrane pass occupies residues F96 to V116. Residues A117–S136 lie on the Extracellular side of the membrane. The chain crosses the membrane as a helical span at residues G137–L159. Residues S160–S176 lie on the Cytoplasmic side of the membrane. Residues F177–I197 form a helical membrane-spanning segment. Residues L198–K217 are Extracellular-facing. Residues A218–H238 traverse the membrane as a helical segment. Over R239–N280 the chain is Cytoplasmic. A helical membrane pass occupies residues I281–W301. Topologically, residues I302–D305 are extracellular. Residues S306–I326 traverse the membrane as a helical segment. Residues Q327–R333 lie on the Cytoplasmic side of the membrane. A helical transmembrane segment spans residues F334–L354. At K355–R375 the chain is on the extracellular side. A helical transmembrane segment spans residues F376–I396. The Cytoplasmic segment spans residues Q397–A577.

This sequence belongs to the glycosyltransferase 22 family.

The protein localises to the endoplasmic reticulum membrane. It catalyses the reaction an alpha-D-Man-(1-&gt;2)-alpha-D-Man-(1-&gt;2)-alpha-D-Man-(1-&gt;3)-[alpha-D-Man-(1-&gt;3)-alpha-D-Man-(1-&gt;6)]-beta-D-Man-(1-&gt;4)-beta-D-GlcNAc-(1-&gt;4)-alpha-D-GlcNAc-diphospho-di-trans,poly-cis-dolichol + a di-trans,poly-cis-dolichyl beta-D-mannosyl phosphate = an alpha-D-Man-(1-&gt;2)-alpha-D-Man-(1-&gt;2)-alpha-D-Man-(1-&gt;3)-[alpha-D-Man-(1-&gt;2)-alpha-D-Man-(1-&gt;3)-alpha-D-Man-(1-&gt;6)]-beta-D-Man-(1-&gt;4)-beta-D-GlcNAc-(1-&gt;4)-alpha-D-GlcNAc-diphospho-di-trans,poly-cis-dolichol + a di-trans,poly-cis-dolichyl phosphate + H(+). The enzyme catalyses an alpha-D-Man-(1-&gt;2)-alpha-D-Man-(1-&gt;2)-alpha-D-Man-(1-&gt;3)-[alpha-D-Man-(1-&gt;2)-alpha-D-Man-(1-&gt;3)-[alpha-D-Man-(1-&gt;6)]-alpha-D-Man-(1-&gt;6)]-beta-D-Man-(1-&gt;4)-beta-D-GlcNAc-(1-&gt;4)-alpha-D-GlcNAc-diphospho-di-trans,poly-cis-dolichol + a di-trans,poly-cis-dolichyl beta-D-mannosyl phosphate = an alpha-D-Man-(1-&gt;2)-alpha-D-Man-(1-&gt;2)-alpha-D-Man-(1-&gt;3)-[alpha-D-Man-(1-&gt;2)-alpha-D-Man-(1-&gt;3)-[alpha-D-Man-(1-&gt;2)-alpha-D-Man-(1-&gt;6)]-alpha-D-Man-(1-&gt;6)]-beta-D-Man-(1-&gt;4)-beta-D-GlcNAc-(1-&gt;4)-alpha-D-GlcNAc-diphospho-di-trans,poly-cis-dolichol + a di-trans,poly-cis-dolichyl phosphate + H(+). It participates in protein modification; protein glycosylation. Functionally, catalyzes the transfer of mannose from Dol-P-Man to lipid-linked oligosaccharides. The sequence is that of Alpha-1,2-mannosyltransferase alg9 (alg9) from Schizosaccharomyces pombe (strain 972 / ATCC 24843) (Fission yeast).